A 274-amino-acid polypeptide reads, in one-letter code: Elongation factor Ts (274 aa).

The tract at residues Thr-79–Val-82 is involved in Mg(2+) ion dislocation from EF-Tu.

The protein belongs to the EF-Ts family.

It localises to the cytoplasm. Associates with the EF-Tu.GDP complex and induces the exchange of GDP to GTP. It remains bound to the aminoacyl-tRNA.EF-Tu.GTP complex up to the GTP hydrolysis stage on the ribosome. The protein is Elongation factor Ts of Aster yellows witches'-broom phytoplasma (strain AYWB).